A 425-amino-acid chain; its full sequence is C2H2 type master regulator of conidiophore development brlA (425 aa).

Disordered regions lie at residues 28–72 (MASS…RHTG), 232–257 (KTHS…PMSR), and 281–301 (VQRQ…SLSL). Residues 30–44 (SSFSPMESPTPTPTS) show a composition bias toward low complexity. Residues 232–256 (KTHSPTTPVRSCSLGTTSGTDTPMS) show a composition bias toward polar residues. Residues 285-294 (PSRKVARKQS) show a composition bias toward basic residues. C2H2-type zinc fingers lie at residues 321–345 (KGRF…PHVC) and 351–376 (ERAF…GRNR). Residues 365 to 374 (TKTHSKRGGR) are compositionally biased toward basic residues. The segment at 365-425 (TKTHSKRGGR…RETSEEAWLE (61 aa)) is disordered.

The protein localises to the nucleus. Functionally, brlA, abaA and wetA are pivotal regulators of conidiophore development and conidium maturation. They act individually and together to regulate their own expression and that of numerous other sporulation-specific genes. Binds promoters of target genes at brlA response elements (BREs) containing the conserved sequence 5'-(C/A)(A/G)AGGG(G/A)-3'. Also coordinates the expression of carbohydrate-active enzymes and of the key effectors of cell wall remodeling during autolysis. The protein is C2H2 type master regulator of conidiophore development brlA of Aspergillus niger (strain ATCC MYA-4892 / CBS 513.88 / FGSC A1513).